The following is a 321-amino-acid chain: NADH-ubiquinone oxidoreductase chain 1 (321 aa).

A run of 8 helical transmembrane segments spans residues 9–29, 75–95, 106–126, 151–171, 177–197, 219–239, 256–276, and 297–317; these read ITNSLLYILSILIAVAFLTLL, ILFTLSPIMALILALTSWAPM, LGLLFIMAMSGMFTYAILWSG, TLGLIIISMAILSGGYSLMLF, HMWLLLSSWPLAMMWFTSTLA, VEFSAGPFALLFLAEYTNILF, PQLFTINLMTKTMILTTLFLW, and YLPLTLAMYLLNTSTSMALCG.

This sequence belongs to the complex I subunit 1 family.

The protein localises to the mitochondrion inner membrane. The catalysed reaction is a ubiquinone + NADH + 5 H(+)(in) = a ubiquinol + NAD(+) + 4 H(+)(out). Its function is as follows. Core subunit of the mitochondrial membrane respiratory chain NADH dehydrogenase (Complex I) that is believed to belong to the minimal assembly required for catalysis. Complex I functions in the transfer of electrons from NADH to the respiratory chain. The immediate electron acceptor for the enzyme is believed to be ubiquinone. The chain is NADH-ubiquinone oxidoreductase chain 1 (MT-ND1) from Lycodon semicarinatus (Ryukyu odd-tooth snake).